A 149-amino-acid polypeptide reads, in one-letter code: DnaJ homolog subfamily C member 24 (149 aa).

Positions 11–82 (DWYSILGADP…ETKREYDLQR (72 aa)) constitute a J domain. The 56-residue stretch at 93–148 (VDAQVYLEEMSWNEGDHSFYLSCRCGGKYSVSKDEAEEVSLISCDTCSLIIELLHY) folds into the DPH-type MB domain. Zn(2+)-binding residues include Cys115, Cys117, Cys136, and Cys139.

This sequence belongs to the DPH4 family. Monomer and homooligomer. Iron binding promotes oligomerization.

The protein localises to the cytoplasm. It is found in the cytoskeleton. It participates in protein modification; peptidyl-diphthamide biosynthesis. Its function is as follows. Stimulates the ATPase activity of several Hsp70-type chaperones. This ability is enhanced by iron-binding. The iron-bound form is redox-active and can function as electron carrier. Plays a role in the diphthamide biosynthesis, a post-translational modification of histidine which occurs in translation elongation factor 2 (EEF2) which can be ADP-ribosylated by diphtheria toxin and by Pseudomonas exotoxin A (Eta). The chain is DnaJ homolog subfamily C member 24 from Homo sapiens (Human).